Reading from the N-terminus, the 215-residue chain is Calmodulin-like protein 5 (215 aa).

A disordered region spans residues 38 to 61 (KNSPPSPSTMLPSPSSSSAPTKRI). Over residues 45 to 57 (STMLPSPSSSSAP) the composition is skewed to low complexity. EF-hand domains are found at residues 61–96 (IDPSELKRVFQMFDKNGDGRITKEELNDSLENLGIY), 97–132 (IPDKDLTQMIHKIDANGDGCVDIDEFESLYSSIVDE), 139–174 (TEEEDMKDAFNVFDQDGDGFITVEELKSVMASLGLK), and 177–212 (KTLDGCKKMIMQVDADGDGRVNYKEFLQMMKGGGFS). Aspartate 74, asparagine 76, aspartate 78, arginine 80, glutamate 85, aspartate 110, asparagine 112, aspartate 114, cysteine 116, glutamate 121, aspartate 152, aspartate 154, aspartate 156, glutamate 163, aspartate 190, aspartate 192, aspartate 194, arginine 196, and glutamate 201 together coordinate Ca(2+).

This sequence belongs to the calmodulin family.

Its function is as follows. Potential calcium sensor. This chain is Calmodulin-like protein 5 (CML5), found in Arabidopsis thaliana (Mouse-ear cress).